Reading from the N-terminus, the 155-residue chain is Small ribosomal subunit protein uS7 (155 aa).

The protein belongs to the universal ribosomal protein uS7 family. In terms of assembly, part of the 30S ribosomal subunit. Contacts proteins S9 and S11.

Functionally, one of the primary rRNA binding proteins, it binds directly to 16S rRNA where it nucleates assembly of the head domain of the 30S subunit. Is located at the subunit interface close to the decoding center, probably blocks exit of the E-site tRNA. The chain is Small ribosomal subunit protein uS7 from Prosthecochloris aestuarii (strain DSM 271 / SK 413).